The sequence spans 191 residues: Akirin-1 (191 aa).

The disordered stretch occupies residues leucine 17 to proline 70. The residue at position 22 (serine 22) is a Phosphoserine. A Nuclear localization signal motif is present at residues proline 23 to cysteine 28. A compositionally biased stretch (pro residues) spans leucine 31–leucine 48. Polar residues predominate over residues glutamine 49 to glutamine 59. The residue at position 71 (threonine 71) is a Phosphothreonine. The short motif at serine 188–serine 191 is the SYVS motif element.

It belongs to the akirin family. In terms of tissue distribution, expressed in macrophages and satellite cells.

The protein localises to the nucleus. In terms of biological role, molecular adapter that acts as a bridge between proteins, and which is involved skeletal muscle development. Functions as a signal transducer for MSTN during skeletal muscle regeneration and myogenesis. May regulate chemotaxis of both macrophages and myoblasts by reorganising actin cytoskeleton, leading to more efficient lamellipodia formation via a PI3 kinase dependent pathway. In contrast to AKIRIN2, not involved in nuclear import of proteasomes. The chain is Akirin-1 from Mus musculus (Mouse).